Here is a 187-residue protein sequence, read N- to C-terminus: Adenylate kinase (187 aa).

Residue 10–15 (GSGKGT) coordinates ATP. The NMP stretch occupies residues 30–59 (STGDLLRAEVAAGSPLGLKAKEVMARGDLV). Residues Thr31, Arg36, 57–59 (DLV), 85–88 (GYPR), and Gln92 contribute to the AMP site. An LID region spans residues 126–136 (GRAKAEGREDD). Arg127 contributes to the ATP binding site. AMP contacts are provided by Arg133 and Arg144. Gly172 is an ATP binding site.

The protein belongs to the adenylate kinase family. Monomer.

The protein resides in the cytoplasm. It catalyses the reaction AMP + ATP = 2 ADP. Its pathway is purine metabolism; AMP biosynthesis via salvage pathway; AMP from ADP: step 1/1. Its function is as follows. Catalyzes the reversible transfer of the terminal phosphate group between ATP and AMP. Plays an important role in cellular energy homeostasis and in adenine nucleotide metabolism. The polypeptide is Adenylate kinase (Xanthomonas axonopodis pv. citri (strain 306)).